Consider the following 808-residue polypeptide: Phenylalanine--tRNA ligase beta subunit (808 aa).

The 110-residue stretch at 40 to 149 (RPELDFVKIV…DQAEVGKTIR (110 aa)) folds into the tRNA-binding domain. Positions 407 to 484 (HKEVRIHTDI…RTKGYDTIQV (78 aa)) constitute a B5 domain. The Mg(2+) site is built by aspartate 462, aspartate 468, glutamate 471, and glutamate 472. The region spanning 716-808 (SQFPEAEIDL…LAGKNGFVLR (93 aa)) is the FDX-ACB domain.

This sequence belongs to the phenylalanyl-tRNA synthetase beta subunit family. Type 1 subfamily. Tetramer of two alpha and two beta subunits. It depends on Mg(2+) as a cofactor.

The protein resides in the cytoplasm. It catalyses the reaction tRNA(Phe) + L-phenylalanine + ATP = L-phenylalanyl-tRNA(Phe) + AMP + diphosphate + H(+). This is Phenylalanine--tRNA ligase beta subunit from Leptospira interrogans serogroup Icterohaemorrhagiae serovar copenhageni (strain Fiocruz L1-130).